The chain runs to 233 residues: ATP-dependent Clp protease proteolytic subunit 2 (233 aa).

The Nucleophile role is filled by Ser-116. The active site involves His-141. The interval 214 to 233 is disordered; it reads EGLKSIQPNGEAADDSEDDA.

This sequence belongs to the peptidase S14 family. In terms of assembly, fourteen ClpP subunits assemble into 2 heptameric rings which stack back to back to give a disk-like structure with a central cavity, resembling the structure of eukaryotic proteasomes.

The protein resides in the cytoplasm. The catalysed reaction is Hydrolysis of proteins to small peptides in the presence of ATP and magnesium. alpha-casein is the usual test substrate. In the absence of ATP, only oligopeptides shorter than five residues are hydrolyzed (such as succinyl-Leu-Tyr-|-NHMec, and Leu-Tyr-Leu-|-Tyr-Trp, in which cleavage of the -Tyr-|-Leu- and -Tyr-|-Trp bonds also occurs).. Cleaves peptides in various proteins in a process that requires ATP hydrolysis. Has a chymotrypsin-like activity. Plays a major role in the degradation of misfolded proteins. This is ATP-dependent Clp protease proteolytic subunit 2 from Salinibacter ruber (strain DSM 13855 / M31).